The following is a 532-amino-acid chain: CTP synthase (532 aa).

The interval 1–267 (MAKFIFVTGG…QDIIIEQLQL (267 aa)) is amidoligase domain. Ser-13 contacts CTP. A UTP-binding site is contributed by Ser-13. Position 14–19 (14–19 (GLGKGI)) interacts with ATP. Tyr-54 serves as a coordination point for L-glutamine. Residue Asp-71 participates in ATP binding. Mg(2+)-binding residues include Asp-71 and Glu-141. CTP contacts are provided by residues 148-150 (DIE), 188-193 (KTKPIQ), and Lys-224. UTP is bound by residues 188–193 (KTKPIQ) and Lys-224. A Glutamine amidotransferase type-1 domain is found at 292 to 532 (EISFVGKYIE…FIKAIVENNK (241 aa)). Residue Gly-354 coordinates L-glutamine. The active-site Nucleophile; for glutamine hydrolysis is the Cys-381. Residues 382–385 (LGMQ), Glu-405, and Arg-461 contribute to the L-glutamine site. Active-site residues include His-506 and Glu-508.

Belongs to the CTP synthase family. Homotetramer.

The catalysed reaction is UTP + L-glutamine + ATP + H2O = CTP + L-glutamate + ADP + phosphate + 2 H(+). It catalyses the reaction L-glutamine + H2O = L-glutamate + NH4(+). It carries out the reaction UTP + NH4(+) + ATP = CTP + ADP + phosphate + 2 H(+). Its pathway is pyrimidine metabolism; CTP biosynthesis via de novo pathway; CTP from UDP: step 2/2. Allosterically activated by GTP, when glutamine is the substrate; GTP has no effect on the reaction when ammonia is the substrate. The allosteric effector GTP functions by stabilizing the protein conformation that binds the tetrahedral intermediate(s) formed during glutamine hydrolysis. Inhibited by the product CTP, via allosteric rather than competitive inhibition. Functionally, catalyzes the ATP-dependent amination of UTP to CTP with either L-glutamine or ammonia as the source of nitrogen. Regulates intracellular CTP levels through interactions with the four ribonucleotide triphosphates. The sequence is that of CTP synthase from Mycoplasma mycoides subsp. mycoides SC (strain CCUG 32753 / NCTC 10114 / PG1).